The chain runs to 428 residues: tRNA modification GTPase MnmE (428 aa).

Positions 20, 77, and 117 each coordinate (6S)-5-formyl-5,6,7,8-tetrahydrofolate. Residues 213–351 (GFEVAIVGSP…LVSRISDTLR (139 aa)) enclose the TrmE-type G domain. Residues 223-228 (NVGKST), 242-248 (SEYAGTT), and 267-270 (DTAG) each bind GTP. Residues Ser227 and Thr248 each coordinate Mg(2+). Lys428 contributes to the (6S)-5-formyl-5,6,7,8-tetrahydrofolate binding site.

Belongs to the TRAFAC class TrmE-Era-EngA-EngB-Septin-like GTPase superfamily. TrmE GTPase family. In terms of assembly, homodimer. Heterotetramer of two MnmE and two MnmG subunits. Requires K(+) as cofactor.

It localises to the cytoplasm. In terms of biological role, exhibits a very high intrinsic GTPase hydrolysis rate. Involved in the addition of a carboxymethylaminomethyl (cmnm) group at the wobble position (U34) of certain tRNAs, forming tRNA-cmnm(5)s(2)U34. The protein is tRNA modification GTPase MnmE of Ruegeria sp. (strain TM1040) (Silicibacter sp.).